The chain runs to 91 residues: Acylphosphatase (91 aa).

In terms of domain architecture, Acylphosphatase-like spans 3–91 (KLRMNVQGRV…EETEQFKVIQ (89 aa)). Active-site residues include Arg-18 and Asn-36.

The protein belongs to the acylphosphatase family.

It catalyses the reaction an acyl phosphate + H2O = a carboxylate + phosphate + H(+). This Enterococcus faecalis (strain ATCC 700802 / V583) protein is Acylphosphatase (acyP).